The sequence spans 148 residues: NADH-quinone oxidoreductase subunit K 2 (148 aa).

The next 3 helical transmembrane spans lie at 3–23, 28–48, and 64–84; these read LAYPAVLAALLFCVGLYGVLA, ILVLMSVELMLNAVNLNLVAF, and LFTIAIAAAEIGIGLAIVLAV. The disordered stretch occupies residues 96-148; that stretch reads LRDTAETDAAETLPDDAGTGPSGTDAAPNGDTTTATGRPGDNAGKNKKAEATR.

It belongs to the complex I subunit 4L family. As to quaternary structure, NDH-1 is composed of 14 different subunits. Subunits NuoA, H, J, K, L, M, N constitute the membrane sector of the complex.

It localises to the cell membrane. The catalysed reaction is a quinone + NADH + 5 H(+)(in) = a quinol + NAD(+) + 4 H(+)(out). NDH-1 shuttles electrons from NADH, via FMN and iron-sulfur (Fe-S) centers, to quinones in the respiratory chain. The immediate electron acceptor for the enzyme in this species is believed to be a menaquinone. Couples the redox reaction to proton translocation (for every two electrons transferred, four hydrogen ions are translocated across the cytoplasmic membrane), and thus conserves the redox energy in a proton gradient. The protein is NADH-quinone oxidoreductase subunit K 2 of Streptomyces griseus subsp. griseus (strain JCM 4626 / CBS 651.72 / NBRC 13350 / KCC S-0626 / ISP 5235).